The sequence spans 623 residues: Transketolase (623 aa).

Position 1 is an N-acetylmethionine (Met1). N6-acetyllysine is present on residues Lys6 and Lys11. Substrate is bound at residue His37. 2 residues coordinate thiamine diphosphate: Ser40 and His77. Ser104 bears the Phosphoserine mark. 123–125 provides a ligand contact to thiamine diphosphate; the sequence is GSL. An N6-acetyllysine modification is found at Lys144. A Mg(2+)-binding site is contributed by Asp155. The thiamine diphosphate site is built by Gly156 and Asn185. Residues Asn185 and Leu187 each contribute to the Mg(2+) site. 3 positions are modified to N6-acetyllysine: Lys204, Lys232, and Lys241. Residues Lys244 and His258 each coordinate thiamine diphosphate. His258 contacts substrate. N6-acetyllysine is present on Lys260. Tyr275 is modified (phosphotyrosine). At Thr287 the chain carries Phosphothreonine. Ser295 carries the phosphoserine modification. Substrate-binding residues include Arg318 and Ser345. A Phosphoserine modification is found at Ser345. Residue Lys352 forms a Glycyl lysine isopeptide (Lys-Gly) (interchain with G-Cter in SUMO2) linkage. Glu366 acts as the Proton donor in catalysis. Thiamine diphosphate is bound at residue Phe392. Positions 416 and 424 each coordinate substrate. Gln428 contributes to the thiamine diphosphate binding site. Position 474 (Arg474) interacts with substrate. Lys538 and Lys603 each carry N6-acetyllysine.

The protein belongs to the transketolase family. Homodimer. The cofactor is Mg(2+). It depends on Ca(2+) as a cofactor. Mn(2+) serves as cofactor. Co(2+) is required as a cofactor. Requires thiamine diphosphate as cofactor.

It carries out the reaction D-sedoheptulose 7-phosphate + D-glyceraldehyde 3-phosphate = aldehydo-D-ribose 5-phosphate + D-xylulose 5-phosphate. Its function is as follows. Catalyzes the transfer of a two-carbon ketol group from a ketose donor to an aldose acceptor, via a covalent intermediate with the cofactor thiamine pyrophosphate. This is Transketolase (Tkt) from Mus musculus (Mouse).